Consider the following 253-residue polypeptide: Triosephosphate isomerase (253 aa).

9 to 11 (NWK) serves as a coordination point for substrate. The Electrophile role is filled by H95. The active-site Proton acceptor is the E167. Residues G173, S213, and 234–235 (GG) each bind substrate. Residue S213 is modified to Phosphoserine.

This sequence belongs to the triosephosphate isomerase family. In terms of assembly, homodimer.

The protein localises to the cytoplasm. The catalysed reaction is D-glyceraldehyde 3-phosphate = dihydroxyacetone phosphate. Its pathway is carbohydrate biosynthesis; gluconeogenesis. The protein operates within carbohydrate degradation; glycolysis; D-glyceraldehyde 3-phosphate from glycerone phosphate: step 1/1. Functionally, involved in the gluconeogenesis. Catalyzes stereospecifically the conversion of dihydroxyacetone phosphate (DHAP) to D-glyceraldehyde-3-phosphate (G3P). The polypeptide is Triosephosphate isomerase (Bacillus licheniformis (strain ATCC 14580 / DSM 13 / JCM 2505 / CCUG 7422 / NBRC 12200 / NCIMB 9375 / NCTC 10341 / NRRL NRS-1264 / Gibson 46)).